We begin with the raw amino-acid sequence, 325 residues long: Methionyl-tRNA formyltransferase (325 aa).

(6S)-5,6,7,8-tetrahydrofolate is bound at residue 112–115; sequence SLLP.

Belongs to the Fmt family.

The enzyme catalyses L-methionyl-tRNA(fMet) + (6R)-10-formyltetrahydrofolate = N-formyl-L-methionyl-tRNA(fMet) + (6S)-5,6,7,8-tetrahydrofolate + H(+). Functionally, attaches a formyl group to the free amino group of methionyl-tRNA(fMet). The formyl group appears to play a dual role in the initiator identity of N-formylmethionyl-tRNA by promoting its recognition by IF2 and preventing the misappropriation of this tRNA by the elongation apparatus. The sequence is that of Methionyl-tRNA formyltransferase from Roseiflexus sp. (strain RS-1).